The following is a 175-amino-acid chain: R-phycoerythrin subunit beta (175 aa).

C82 contributes to the (2R,3E)-phycoerythrobilin binding site.

Belongs to the phycobiliprotein family. As to quaternary structure, homodimer. Post-translationally, contains one covalently linked phycoerythrobilin chromophore.

Functionally, green-light absorbing phycoerythrin of unknown function. In Prochlorococcus marinus subsp. pastoris (strain CCMP1986 / NIES-2087 / MED4), this protein is R-phycoerythrin subunit beta (cpeB).